Consider the following 291-residue polypeptide: N-acetylmannosamine kinase (291 aa).

ATP is bound by residues 5–12 and 132–139; these read AIDIGGTK and GVGGGVVS. 4 residues coordinate Zn(2+): His-156, Cys-166, Cys-168, and Cys-173.

Belongs to the ROK (NagC/XylR) family. NanK subfamily. In terms of assembly, homodimer.

The enzyme catalyses an N-acyl-D-mannosamine + ATP = an N-acyl-D-mannosamine 6-phosphate + ADP + H(+). The protein operates within amino-sugar metabolism; N-acetylneuraminate degradation; D-fructose 6-phosphate from N-acetylneuraminate: step 2/5. Catalyzes the phosphorylation of N-acetylmannosamine (ManNAc) to ManNAc-6-P. In Escherichia coli (strain 55989 / EAEC), this protein is N-acetylmannosamine kinase.